We begin with the raw amino-acid sequence, 1004 residues long: Receptor-type tyrosine-protein phosphatase N2 (1004 aa).

The signal sequence occupies residues 1-27; that stretch reads MGLPLPLLLLLLLPPPLPRALPAPASA. Residues 1-409 are involved in localization to secretory granules; interaction with CPE; it reads MGLPLPLLLL…PEAPLLEKSS (409 aa). Residues 28-603 are Extracellular-facing; the sequence is RGRQLPGRLG…HPEEQEDSTK (576 aa). Position 259 is an omega-N-methylarginine (R259). Disordered stretches follow at residues 274–294, 333–360, and 393–459; these read APAL…SLSM, QSDP…DAPE, and DHGS…WRLE. Phosphoserine is present on S340. Composition is skewed to basic and acidic residues over residues 341 to 356 and 407 to 418; these read QESH…REQA and KSSRAEMKKSEQ. Acidic residues predominate over residues 419–430; that stretch reads PEEVLSSEEETA. S424 and S425 each carry phosphoserine. Over residues 431–450 the composition is skewed to basic and acidic residues; the sequence is GVEHVKSRTYSKDLLERKPN. N553 is a glycosylation site (N-linked (GlcNAc...) asparagine). A helical transmembrane segment spans residues 604 to 624; the sequence is FIVLTFLSIACILAVLLASSL. Over 625–1004 the chain is Cytoplasmic; the sequence is AYCLRHNSHY…VNAILKALPQ (380 aa). The Tyrosine-based internalization motif motif lies at 655–664; that stretch reads YQELCRQRMA. A disordered region spans residues 665–710; the sequence is VRPQDHSEGPHTSRINSVSSQLSDGPMPSPSARSSTSSWSEEPAQS. Positions 677–687 are enriched in polar residues; sequence SRINSVSSQLS. The residue at position 681 (S681) is a Phosphoserine; by PKA. S687 carries the phosphoserine modification. Residues 694–710 show a composition bias toward low complexity; sequence PSARSSTSSWSEEPAQS. Phosphothreonine; by PKA is present on T700. The region spanning 734–994 is the Tyrosine-protein phosphatase domain; it reads LEKEWEALCA…EFALTAVAEE (261 aa). Residues D902 and 934–940 contribute to the substrate site; that span reads CSDGAGR. Catalysis depends on C934, which acts as the Phosphocysteine intermediate. K959 is modified (N6-acetyllysine). Substrate is bound at residue Q979. A Leucine-based sorting signal motif is present at residues 993-999; it reads EEVNAIL.

Belongs to the protein-tyrosine phosphatase family. Receptor class 8 subfamily. As to quaternary structure, self-associates. Interacts (via cytoplasmic domain) with PTPRN (via cytoplasmic domain). Interacts (precursor form) with CPE. Interacts with HAP1. Interacts with AP2A1 or AP2A2 and AP1G1; indicative for an association with adaptor protein complex 2 (AP-2) and adaptor protein complex 1 (AP-1). Interacts with AP2M1; indicative for an association with adaptor protein complex 2 (AP-2). Interacts with MYO5A. Subject to proteolytic cleavage at multiple sites.

It is found in the cytoplasmic vesicle. It localises to the secretory vesicle membrane. Its subcellular location is the secretory vesicle. The protein resides in the synaptic vesicle membrane. It catalyses the reaction O-phospho-L-tyrosyl-[protein] + H2O = L-tyrosyl-[protein] + phosphate. Functionally, plays a role in vesicle-mediated secretory processes. Required for normal accumulation of secretory vesicles in hippocampus, pituitary and pancreatic islets. Required for the accumulation of normal levels of insulin-containing vesicles and preventing their degradation. Plays a role in insulin secretion in response to glucose stimuli. Required for normal accumulation of the neurotransmitters norepinephrine, dopamine and serotonin in the brain. In females, but not in males, required for normal accumulation and secretion of pituitary hormones, such as luteinizing hormone (LH) and follicle-stimulating hormone (FSH). Required to maintain normal levels of renin expression and renin release. May regulate catalytic active protein-tyrosine phosphatases such as PTPRA through dimerization. Has phosphatidylinositol phosphatase activity; the PIPase activity is involved in its ability to regulate insulin secretion. Can dephosphorylate phosphatidylinositol 4,5-biphosphate, phosphatidylinositol 5-phosphate and phosphatidylinositol 3-phosphate. Regulates PI(4,5)P2 level in the plasma membrane and localization of cofilin at the plasma membrane and thus is indirectly involved in regulation of actin dynamics related to cell migration and metastasis; upon hydrolysis of PI(4,5)P2 cofilin is released from the plasma membrane and acts in the cytoplasm in severing F-actin filaments. The chain is Receptor-type tyrosine-protein phosphatase N2 (Ptprn2) from Rattus norvegicus (Rat).